Reading from the N-terminus, the 538-residue chain is uncharacterized protein (538 aa).

An N-terminal signal peptide occupies residues 1 to 17; it reads MSFSATILFSPPSGSEA. The interval 101–131 is disordered; that stretch reads RQGKVSIPDEDGESRAHSSPPEEPGPLKESP. Glycyl lysine isopeptide (Lys-Gly) (interchain with G-Cter in SUMO2) cross-links involve residues Lys128 and Lys221. Ser224 is modified (phosphoserine). Positions 233–253 are disordered; it reads RATPETGPENGTKLPPPRPED. Ser285 and Ser428 each carry phosphoserine. The tract at residues 488 to 523 is disordered; sequence LPPELYNPNFQEEEDEGGDENAPGSPSFDQPHKTCC.

It is found in the secreted. This is an uncharacterized protein from Homo sapiens (Human).